The primary structure comprises 89 residues: Elongation factor 1-beta (89 aa).

Belongs to the EF-1-beta/EF-1-delta family.

Functionally, promotes the exchange of GDP for GTP in EF-1-alpha/GDP, thus allowing the regeneration of EF-1-alpha/GTP that could then be used to form the ternary complex EF-1-alpha/GTP/AAtRNA. The protein is Elongation factor 1-beta of Methanococcus maripaludis (strain C5 / ATCC BAA-1333).